Consider the following 143-residue polypeptide: Large ribosomal subunit protein uL11 (143 aa).

It belongs to the universal ribosomal protein uL11 family. As to quaternary structure, part of the ribosomal stalk of the 50S ribosomal subunit. Interacts with L10 and the large rRNA to form the base of the stalk. L10 forms an elongated spine to which L12 dimers bind in a sequential fashion forming a multimeric L10(L12)X complex. In terms of processing, one or more lysine residues are methylated.

Forms part of the ribosomal stalk which helps the ribosome interact with GTP-bound translation factors. The sequence is that of Large ribosomal subunit protein uL11 from Kineococcus radiotolerans (strain ATCC BAA-149 / DSM 14245 / SRS30216).